The chain runs to 302 residues: Lysosomal thioesterase PPT2 (302 aa).

A signal peptide spans 1–27 (MLGLCGQRLPAAWVLLLLPFLPLLLLA). N-linked (GlcNAc...) asparagine glycosylation is present at Asn60. Intrachain disulfides connect Cys109–Cys117 and Cys165–Cys176. Residue Ser111 is the Nucleophile of the active site. N-linked (GlcNAc...) asparagine glycans are attached at residues Asn190 and Asn206. The active site involves Asp228. A glycan (N-linked (GlcNAc...) asparagine) is linked at Asn245. Cysteines 276 and 296 form a disulfide. His283 is an active-site residue. A glycan (N-linked (GlcNAc...) asparagine) is linked at Asn289.

The protein belongs to the palmitoyl-protein thioesterase family. Broadly expressed, with highest levels in skeletal muscle.

It localises to the lysosome. It carries out the reaction hexadecanoyl-CoA + H2O = hexadecanoate + CoA + H(+). The enzyme catalyses S-hexadecanoyl-N-acetylcysteamine + H2O = N-acetylcysteamine + hexadecanoate + H(+). Catalyzes the cleavage of thioester bonds from S-palmitoyl-CoA or S-palmitoyl-N-acetylcysteamine (unbranched structures) but does not have activity against palmitoylcysteine or palmitoylated proteins, branched structures or bulky head groups. Conversely, hydrolyzes both long and short chain fatty acyl-CoA substrate. In terms of biological role, catalytically inactive due to lack of active site His-283. The sequence is that of Lysosomal thioesterase PPT2 from Homo sapiens (Human).